A 132-amino-acid chain; its full sequence is Small ribosomal subunit protein uS13 (132 aa).

The segment covering 101-125 (RGLPVRGQRTKTNARTRKGPRKTVA) has biased composition (basic residues). Residues 101–132 (RGLPVRGQRTKTNARTRKGPRKTVANKKIETR) are disordered.

It belongs to the universal ribosomal protein uS13 family. Part of the 30S ribosomal subunit. Forms a loose heterodimer with protein S19. Forms two bridges to the 50S subunit in the 70S ribosome.

Its function is as follows. Located at the top of the head of the 30S subunit, it contacts several helices of the 16S rRNA. In the 70S ribosome it contacts the 23S rRNA (bridge B1a) and protein L5 of the 50S subunit (bridge B1b), connecting the 2 subunits; these bridges are implicated in subunit movement. Contacts the tRNAs in the A and P-sites. This is Small ribosomal subunit protein uS13 from Ureaplasma parvum serovar 3 (strain ATCC 27815 / 27 / NCTC 11736).